A 393-amino-acid polypeptide reads, in one-letter code: NAD(P)H-quinone oxidoreductase subunit H, chloroplastic (393 aa).

This sequence belongs to the complex I 49 kDa subunit family. NDH is composed of at least 16 different subunits, 5 of which are encoded in the nucleus.

The protein localises to the plastid. It localises to the chloroplast thylakoid membrane. The catalysed reaction is a plastoquinone + NADH + (n+1) H(+)(in) = a plastoquinol + NAD(+) + n H(+)(out). The enzyme catalyses a plastoquinone + NADPH + (n+1) H(+)(in) = a plastoquinol + NADP(+) + n H(+)(out). NDH shuttles electrons from NAD(P)H:plastoquinone, via FMN and iron-sulfur (Fe-S) centers, to quinones in the photosynthetic chain and possibly in a chloroplast respiratory chain. The immediate electron acceptor for the enzyme in this species is believed to be plastoquinone. Couples the redox reaction to proton translocation, and thus conserves the redox energy in a proton gradient. The sequence is that of NAD(P)H-quinone oxidoreductase subunit H, chloroplastic from Drimys granadensis.